The sequence spans 379 residues: Hydrogenase expression/formation protein HupD (379 aa).

Fe cation is bound by residues Cys-36, Cys-64, and Cys-67.

This sequence belongs to the HypD family.

The polypeptide is Hydrogenase expression/formation protein HupD (hupD) (Azotobacter chroococcum mcd 1).